The chain runs to 189 residues: MPKTRRRPRRSQRKRPPTPWPTSQGLDRVFFSDTQSTCLETVYKATGAPSLGDYVRPAYIVTPYWPPVQSIRSPGTPSMDALSAQLYSSLSLDSPPSPPREPLRPSRSLPRQSLIQPPTFHPPSSRPCANTPPSEMDTWNPPLGSTSQPCLFQTPDSGPKTCTPSGEAPLSACTSTSFPPPSPGPSCPT.

Positions 1 to 16 are enriched in basic residues; it reads MPKTRRRPRRSQRKRP. Residues 1–27 form a disordered region; it reads MPKTRRRPRRSQRKRPPTPWPTSQGLD. Residues 2-18 carry the Nuclear localization signal, and RNA-binding (RxRE) motif; it reads PKTRRRPRRSQRKRPPT. A homomultimerization region spans residues 56–70; sequence RPAYIVTPYWPPVQS. Serine 70 is subject to Phosphoserine; by host. The disordered stretch occupies residues 73 to 189; the sequence is SPGTPSMDAL…PPSPGPSCPT (117 aa). Residues 80–94 are compositionally biased toward low complexity; that stretch reads DALSAQLYSSLSLDS. The short motif at 82-93 is the Nuclear export signal element; the sequence is LSAQLYSSLSLD. The homomultimerization stretch occupies residues 123–131; that stretch reads PSSRPCANT. Positions 143 to 164 are enriched in polar residues; it reads LGSTSQPCLFQTPDSGPKTCTP. Threonine 174 carries the post-translational modification Phosphothreonine; by host. Serine 177 carries the post-translational modification Phosphoserine; by host. Positions 178 to 189 are enriched in pro residues; that stretch reads FPPPSPGPSCPT.

It belongs to the deltaretrovirus Rex protein family. Homomultimer. Multimeric assembly is essential for activity and involves XPO1. Binds to human XPO1 and KPNB1. Interacts (via N-terminal nuclear localization signal) with human NPM1.

The protein resides in the host nucleus. It is found in the host nucleolus. Its subcellular location is the host cytoplasm. Its function is as follows. Rex escorts unspliced gag-pro-pol and singly spliced env mRNAs out of the nucleus of infected cells. These mRNAs carry a recognition sequence called Rex responsive element (RxRE or XRE) located at the 3' region of the long terminal repeat (LTR). This function is essential since most HTLV proteins are translated from unspliced or partially spliced pre-mRNAs that cannot exit the nucleus by the pathway used by fully processed cellular mRNAs. Rex itself is translated from a fully spliced mRNA that probably readily exits the nucleus. Rex's nuclear localization signal (NLS) binds directly to KPNB1/importin beta-1 without previous binding to KPNA1/importin alpha-1. KPNB1 binds to the GDP bound form of RAN (Ran-GDP) and targets Rex to the nucleus. In the nucleus, the conversion from Ran-GDP to Ran-GTP dissociates Rex from KPNB1 and allows Rex's binding to the RRE in viral pre-mRNAs. Rex multimerizes on the RRE via cooperative assembly. This multimerization is critical for its full biological activity, since it may shield the viral RNA from being spliced or down-regulated, and probably exposes Rex's nuclear export signal (NES) to the surface. Rex can then form a complex with XPO1/CRM1, RANBP3 and Ran-GTP, leading to nuclear export of the complex. Conversion from Ran-GTP to Ran-GDP mediates dissociation of the Rex/RRE/XPO1/RANBP3/RAN complex, so that Rex can return to the nucleus for a subsequent round of export. This is Protein Rex from Human T-cell leukemia virus 1 (strain Japan ATK-1 subtype A) (HTLV-1).